A 324-amino-acid chain; its full sequence is Cytosolic sulfotransferase 13 (324 aa).

76–81 provides a ligand contact to 3'-phosphoadenylyl sulfate; it reads KSGTTW. Residue histidine 134 is the Proton acceptor of the active site. 3'-phosphoadenylyl sulfate is bound by residues arginine 156, serine 164, tyrosine 222, and 288-290; that span reads RKG.

It belongs to the sulfotransferase 1 family.

Its subcellular location is the cytoplasm. Functionally, sulfotransferase that utilizes 3'-phospho-5'-adenylyl sulfate (PAPS) as sulfonate donor. This Arabidopsis thaliana (Mouse-ear cress) protein is Cytosolic sulfotransferase 13 (SOT13).